The following is a 349-amino-acid chain: UDP-3-O-acylglucosamine N-acyltransferase (349 aa).

Residue H246 is the Proton acceptor of the active site.

The protein belongs to the transferase hexapeptide repeat family. LpxD subfamily. As to quaternary structure, homotrimer.

The enzyme catalyses a UDP-3-O-[(3R)-3-hydroxyacyl]-alpha-D-glucosamine + a (3R)-hydroxyacyl-[ACP] = a UDP-2-N,3-O-bis[(3R)-3-hydroxyacyl]-alpha-D-glucosamine + holo-[ACP] + H(+). The protein operates within bacterial outer membrane biogenesis; LPS lipid A biosynthesis. Catalyzes the N-acylation of UDP-3-O-acylglucosamine using 3-hydroxyacyl-ACP as the acyl donor. Is involved in the biosynthesis of lipid A, a phosphorylated glycolipid that anchors the lipopolysaccharide to the outer membrane of the cell. This chain is UDP-3-O-acylglucosamine N-acyltransferase, found in Protochlamydia amoebophila (strain UWE25).